A 401-amino-acid chain; its full sequence is Nicotinate phosphoribosyltransferase (401 aa).

His221 carries the post-translational modification Phosphohistidine; by autocatalysis.

This sequence belongs to the NAPRTase family. Transiently phosphorylated on a His residue during the reaction cycle. Phosphorylation strongly increases the affinity for substrates and increases the rate of nicotinate D-ribonucleotide production. Dephosphorylation regenerates the low-affinity form of the enzyme, leading to product release.

The catalysed reaction is nicotinate + 5-phospho-alpha-D-ribose 1-diphosphate + ATP + H2O = nicotinate beta-D-ribonucleotide + ADP + phosphate + diphosphate. Its pathway is cofactor biosynthesis; NAD(+) biosynthesis; nicotinate D-ribonucleotide from nicotinate: step 1/1. Functionally, catalyzes the synthesis of beta-nicotinate D-ribonucleotide from nicotinate and 5-phospho-D-ribose 1-phosphate at the expense of ATP. This chain is Nicotinate phosphoribosyltransferase, found in Serratia proteamaculans (strain 568).